A 139-amino-acid polypeptide reads, in one-letter code: D-ribose pyranase (139 aa).

The active-site Proton donor is the H20. Substrate is bound by residues D28, H106, and 128 to 130 (YAN).

The protein belongs to the RbsD / FucU family. RbsD subfamily. As to quaternary structure, homodecamer.

The protein resides in the cytoplasm. It carries out the reaction beta-D-ribopyranose = beta-D-ribofuranose. Its pathway is carbohydrate metabolism; D-ribose degradation; D-ribose 5-phosphate from beta-D-ribopyranose: step 1/2. Catalyzes the interconversion of beta-pyran and beta-furan forms of D-ribose. The sequence is that of D-ribose pyranase from Photorhabdus laumondii subsp. laumondii (strain DSM 15139 / CIP 105565 / TT01) (Photorhabdus luminescens subsp. laumondii).